The sequence spans 93 residues: Small ribosomal subunit protein uS19 (93 aa).

It belongs to the universal ribosomal protein uS19 family.

Functionally, protein S19 forms a complex with S13 that binds strongly to the 16S ribosomal RNA. In Acidothermus cellulolyticus (strain ATCC 43068 / DSM 8971 / 11B), this protein is Small ribosomal subunit protein uS19.